Consider the following 1090-residue polypeptide: Exoglucanase B (1090 aa).

The first 33 residues, methionine 1 to alanine 33, serve as a signal peptide directing secretion. The propeptide occupies alanine 34–alanine 53. Residues alanine 54–proline 699 form a catalytic region. The active-site Nucleophile is the aspartate 513. 3 Fibronectin type-III domains span residues valine 706–threonine 791, alanine 797–aspartate 887, and valine 897–proline 984. The CBM2 domain maps to threonine 983–threonine 1090. A disulfide bridge connects residues cysteine 990 and cysteine 1089. Residues asparagine 1069 to threonine 1090 are disordered. A compositionally biased stretch (polar residues) spans glycine 1070 to threonine 1090.

The protein belongs to the glycosyl hydrolase 48 (cellulase L) family.

It catalyses the reaction Hydrolysis of (1-&gt;4)-beta-D-glucosidic linkages in cellulose and cellotetraose, releasing cellobiose from the non-reducing ends of the chains.. Functionally, hydrolyzes cellohexaose to a mixture of cellotetraose, cellotriose and cellobiose, with only a trace of glucose. It hydrolyzed cellopentaose to cellotriose and cellobiose, and cellotetraose to cellobiose, but it did not hydrolyze cellotriose. Also has weak endoglucanase activity. Hydrolyzes glucosidic bonds with inversion of anomeric configuration. This is Exoglucanase B (cbhB) from Cellulomonas fimi (strain ATCC 484 / DSM 20113 / JCM 1341 / CCUG 24087 / LMG 16345 / NBRC 15513 / NCIMB 8980 / NCTC 7547 / NRS-133).